The sequence spans 275 residues: Bis(5'-nucleosyl)-tetraphosphatase, symmetrical (275 aa).

The protein belongs to the Ap4A hydrolase family.

It catalyses the reaction P(1),P(4)-bis(5'-adenosyl) tetraphosphate + H2O = 2 ADP + 2 H(+). In terms of biological role, hydrolyzes diadenosine 5',5'''-P1,P4-tetraphosphate to yield ADP. In Pasteurella multocida (strain Pm70), this protein is Bis(5'-nucleosyl)-tetraphosphatase, symmetrical (apaH).